The primary structure comprises 816 residues: MAKTNSYKKVIAGTMTAAMVAGVVSPVAAAGKSFPDVPADHWGIDSINYLVEKGAVTGNDKGMFEPGKELTRAEAATMMAQILNLPIDKDAKPSFADSQGQWYTPFIAAVEKAGVIKGTGNGFEPNGKIDRVSMASLLVEAYKLDTKVNGTPATKFKDLETLNWGKEKANILVELGISVGTTADKWEPKKTVTKAEAAQFIAKTDKQFGTEVAKVESAKAVTTQKVEVKFSKAVEKLTKEDVKLANKANNDKVLVKDVKLSEDKKSATVELYSNLAAKQTYTVDVNKVGKVEVTVGSLEAKTIEMADQTVVADEPTALKYTVKDENGTEVVSPAGIEFVTPAAEKINAKGEITLAKGTSTTVKAVYKKDGKVVAESKEVKVSAEGTAVASISNWTVAAEKADFTSKDFKQNDKVYEGDNVSVQVELKDQFNNVVNNVKAEYESLNTEVAVVDKATGKVTVLSAGKAPVKVTVKDSKGKELVSKTVEIEAFAQKAMKEIKLEKTNVALSTKDVTDFKVKAPVLDQYGKEFAAPVEVKVLDKDGKELKEQKLVAKYENKELVLNAHGQEAGKYTVELTAKSGKKEVKSKLALELKAPGVFSKFDVRGLENELDKYVTEENKKNEMVVSVLPVDANGLVLREKEAATLKVTTTDKDGKVVDATSGQVAVNDAAGTITVGNEAKAGETYKVTVVADGKLITTHSFKVVDTAPAAKKLAVDFTSTSLNEVAQGSELKTALLNILSVDGVPATTAGATVTDVKFVSADTNVVSEETAKFGTKGSTSIFVKELTVKKGEQTQKVELDKPVRVDVSIKEVKEVK.

The first 29 residues, 1 to 29 (MAKTNSYKKVIAGTMTAAMVAGVVSPVAA), serve as a signal peptide directing secretion. SLH domains are found at residues 30–93 (AGKS…DAKP), 94–150 (SFAD…KVNG), and 152–215 (PATK…VAKV). A BIG2 domain is found at 403-480 (FTSKDFKQND…TVKDSKGKEL (78 aa)).

It is found in the secreted. The protein resides in the cell wall. The protein localises to the S-layer. Its function is as follows. The S-layer is a paracrystalline mono-layered assembly of proteins which coat the surface of bacteria. In Bacillus thuringiensis subsp. finitimus, this protein is S-layer protein.